Here is a 175-residue protein sequence, read N- to C-terminus: Protein TWIN SISTER of FT (175 aa).

Belongs to the phosphatidylethanolamine-binding protein family.

Its subcellular location is the cytoplasm. Functionally, may form complexes with phosphorylated ligands by interfering with kinases and their effectors. The polypeptide is Protein TWIN SISTER of FT (TSF) (Arabidopsis thaliana (Mouse-ear cress)).